The sequence spans 215 residues: MRVILLGAPGAGKGTQAKFITEKFGIPQVSTGDMLRAAVKAETELGLKAKSVMDSGGLVSDDLIIGLIKDRLAQPDCANGVLFDGFPRTIPQAEALLKAGLEIDHVLEIAVDDEEIVKRMSGRRVHEGSGRIYHTIFNPPKVECIDDVTGEPLLQRKDDVEETVRHRLSVYHAQTKPLVEFYSKLEAKDGKPKCSHIPGVGSVEEITAKVLEALK.

An ATP-binding site is contributed by 10-15; it reads GAGKGT. The segment at 30–59 is NMP; the sequence is STGDMLRAAVKAETELGLKAKSVMDSGGLV. AMP-binding positions include T31, R36, 57 to 59, 85 to 88, and Q92; these read GLV and GFPR. The segment at 122–159 is LID; it reads GRRVHEGSGRIYHTIFNPPKVECIDDVTGEPLLQRKDD. Residues R123 and 132 to 133 each bind ATP; that span reads IY. Positions 156 and 167 each coordinate AMP. G201 lines the ATP pocket.

It belongs to the adenylate kinase family. In terms of assembly, monomer.

It localises to the cytoplasm. The catalysed reaction is AMP + ATP = 2 ADP. It functions in the pathway purine metabolism; AMP biosynthesis via salvage pathway; AMP from ADP: step 1/1. Functionally, catalyzes the reversible transfer of the terminal phosphate group between ATP and AMP. Plays an important role in cellular energy homeostasis and in adenine nucleotide metabolism. In Pseudomonas savastanoi pv. phaseolicola (strain 1448A / Race 6) (Pseudomonas syringae pv. phaseolicola (strain 1448A / Race 6)), this protein is Adenylate kinase.